Reading from the N-terminus, the 597-residue chain is MTTPLSSYSTTVTNHHPTFSFESLNSISSNNSTRNNQSNSVNSLLYFNSSGSSMVSSSSDAAPTSISTTTTSTTSMTDASANADNQQVYTITEEDSINDINRKEQNSFSIQPNQTPTMLPTSSYTLQRPPGLHEYTSSISSISSTSSNSTSAPVSPALINYSPKHSRKPNSLNLNRNMKNLSLNLHDSTNGYTSPLPKSTNSNQPRGNFIMDSPSKKSTPVNRIGNNNGNDYINATLLQTPSITQTPTMPPPLSLAQGPPSSVGSESVYKFPLISNACLNYSAGDSDSEVESISMKQAAKNTIIPPMAPPFALQSKSSPLSTPPRLHSPLGVDRGLPISMSPIQSSLNQKFNNITLQTPLNSSFSINNDEATNFNNKNNKNNNNNSTATTTITNTILSTPQNVRYNSKKFHPPEELQESTSINAYPNGPKNVLNNLIYLYSDPAQGKIDINKFDLVINVAKECDNMSLQYMNQVPNQREYVYIPWSHNSNISKDLFQITNKIDQFFTNGRKILIHCQCGVSRSACVVVAFYMKKFQLGVNEAYELLKNGDQKYIDACDRICPNMNLIFELMEFGDKLNNNEISTQQLLMNSPPTINL.

Residues 55-81 (VSSSSDAAPTSISTTTTSTTSMTDASA) show a composition bias toward low complexity. Disordered regions lie at residues 55-89 (VSSSSDAAPTSISTTTTSTTSMTDASANADNQQVY), 107-172 (SFSI…PNSL), and 188-228 (STNG…GNNN). Residues 107–126 (SFSIQPNQTPTMLPTSSYTL) show a composition bias toward polar residues. Low complexity predominate over residues 136–151 (TSSISSISSTSSNSTS). 2 stretches are compositionally biased toward polar residues: residues 188–206 (STNGYTSPLPKSTNSNQPR) and 216–228 (KKSTPVNRIGNNN). Residues 428–579 (GPKNVLNNLI…LMEFGDKLNN (152 aa)) enclose the Tyrosine-protein phosphatase domain. Cys-516 (phosphocysteine intermediate) is an active-site residue.

The protein belongs to the protein-tyrosine phosphatase family. Non-receptor class dual specificity subfamily.

It carries out the reaction O-phospho-L-tyrosyl-[protein] + H2O = L-tyrosyl-[protein] + phosphate. This is Probable tyrosine-protein phosphatase (CPP1) from Candida albicans (strain WO-1) (Yeast).